The primary structure comprises 328 residues: Arylacetonitrilase (328 aa).

A CN hydrolase domain is found at Val-5–Phe-278. Glu-45 functions as the Proton acceptor in the catalytic mechanism. The active site involves Lys-125. The Nucleophile role is filled by Cys-160.

Belongs to the carbon-nitrogen hydrolase superfamily. Nitrilase family.

It carries out the reaction a nitrile + 2 H2O = a carboxylate + NH4(+). The enzyme catalyses 4-chlorophenylacetonitrile + 2 H2O = 4-chlorophenylacetate + NH4(+). Functionally, nitrilase that hydrolyzes preferentially phenylacetonitrile, (R,S)-mandelonitrile, and 3-indolylacetonitrile. The sequence is that of Arylacetonitrilase from Aspergillus niger (strain ATCC MYA-4892 / CBS 513.88 / FGSC A1513).